The following is a 44-amino-acid chain: DNA-directed RNA polymerase subunit Rpo12 (44 aa).

Residues C8, C22, and C25 each contribute to the Zn(2+) site.

This sequence belongs to the archaeal Rpo12/eukaryotic RPC10 RNA polymerase subunit family. As to quaternary structure, part of the RNA polymerase complex. Requires Zn(2+) as cofactor.

It localises to the cytoplasm. The catalysed reaction is RNA(n) + a ribonucleoside 5'-triphosphate = RNA(n+1) + diphosphate. In terms of biological role, DNA-dependent RNA polymerase (RNAP) catalyzes the transcription of DNA into RNA using the four ribonucleoside triphosphates as substrates. The polypeptide is DNA-directed RNA polymerase subunit Rpo12 (Natronomonas pharaonis (strain ATCC 35678 / DSM 2160 / CIP 103997 / JCM 8858 / NBRC 14720 / NCIMB 2260 / Gabara) (Halobacterium pharaonis)).